A 525-amino-acid chain; its full sequence is EGF domain-specific O-linked N-acetylglucosamine transferase (525 aa).

The first 24 residues, 1-24, serve as a signal peptide directing secretion; that stretch reads MVPLRLVLLLHIIHFSCENEVGSA. The Required for optimal activity signature appears at 293 to 295; that stretch reads DYE. N-linked (GlcNAc...) asparagine glycosylation is present at N352. The Prevents secretion from ER motif lies at 522-525; it reads RDEL.

The protein belongs to the glycosyltransferase 61 family.

It is found in the endoplasmic reticulum lumen. It catalyses the reaction L-seryl-[protein] + UDP-N-acetyl-alpha-D-glucosamine = 3-O-(N-acetyl-beta-D-glucosaminyl)-L-seryl-[protein] + UDP + H(+). The catalysed reaction is L-threonyl-[protein] + UDP-N-acetyl-alpha-D-glucosamine = 3-O-(N-acetyl-beta-D-glucosaminyl)-L-threonyl-[protein] + UDP + H(+). Catalyzes the transfer of a single N-acetylglucosamine from UDP-GlcNAc to a serine or threonine residue in extracellular proteins resulting in their modification with a beta-linked N-acetylglucosamine (O-GlcNAc). Specifically glycosylates the Thr residue located between the fifth and sixth conserved cysteines of folded EGF-like domains. This chain is EGF domain-specific O-linked N-acetylglucosamine transferase (eogt), found in Xenopus laevis (African clawed frog).